A 234-amino-acid polypeptide reads, in one-letter code: Protein rgg8 (234 aa).

Its subcellular location is the cytoplasm. The protein localises to the nucleus. This is Protein rgg8 (rgg8) from Schizosaccharomyces pombe (strain 972 / ATCC 24843) (Fission yeast).